The following is a 563-amino-acid chain: Testis-expressed basic protein 1 (563 aa).

Residues 3-23 (VLEITLAVILTLLGLAILAIL) traverse the membrane as a helical segment. Positions 56-81 (GSRHAYSTQSDTSYDNRERSKRDYTP) are disordered. Residues 69-79 (YDNRERSKRDY) are compositionally biased toward basic and acidic residues. Residues 99–119 (ELILLLMCFILALSRSSIGSI) form a helical membrane-spanning segment. A disordered region spans residues 311–563 (SEMSIPQGQG…GRKYNKKVEE (253 aa)). Residues 367–383 (QVEKSEMGVPRRQESQV) show a composition bias toward basic and acidic residues. Residues 384–395 (KKSQSGVSKGQE) show a composition bias toward low complexity. Composition is skewed to basic and acidic residues over residues 412–447 (QVEK…KKSE) and 485–544 (EAQE…EKSK).

The protein localises to the membrane. In Homo sapiens (Human), this protein is Testis-expressed basic protein 1.